The sequence spans 432 residues: Negative regulator of systemic acquired resistance SNI1 (432 aa).

Interacts with SSN2. Binds to NTL9/CBNAC to promote its binding to promoters of target genes. Component of the SMC5-SMC6 complex which consists at least of SMC5 and SMC6B. Interacts with RAD17. Expressed at low levels in the veins.

It localises to the nucleus. Functionally, component of the SMC5-SMC6 complex, a complex involved in repair of DNA double-strand breaks by homologous recombination. Transcription repressor that prevents expression of pathogenesis-related genes (PR) via histone modifications and binding negative cis-acting elements at their promoters. Negative regulator of hypersensitive response (HR) and systemic acquired resistance (SAR) required to dampen the basal expression of pathogenesis related (PR) genes. Functions synergistically with NTL9/CBNAC as negative regulator of pathogen-induced PR1 expression and basal resistance to a virulent strain of P.syringae. Binds to the PR1 gene promoter to suppress defense response in the absence of pathogen challenge and is removed in response to induction. Negatively regulates both gene expression and DNA recombination during pathogen infection, thus being involved in short-term defense response and a long-term survival strategy. Prevents effective immune responses that involve activation of DNA damage responses, probably by negatively regulating the DNA damage sensors RAD17 and ATR. Negative regulator of defenses against the beet cyst nematode H.schachtii. The chain is Negative regulator of systemic acquired resistance SNI1 from Arabidopsis thaliana (Mouse-ear cress).